Here is a 134-residue protein sequence, read N- to C-terminus: Pre-histone-like nucleoprotein (134 aa).

A propeptide spanning residues 2-23 (AILISPTNNTGWGLGTHKLFGG) is cleaved from the precursor. Residues 40–62 (RASWGSKGRRRRQGRARGAPLDP) form a disordered region. The short motif at 125 to 134 (KRKRRVRFRQ) is the Nuclear localization signal element.

Belongs to the adenoviridae histone-like nucleoprotein family. Interacts with the core-capsid bridging protein; this interaction bridges the virus core to the capsid. Interacts with host NPM1; this interaction might play a role in placing the pre-histone-like nucleoprotein on the viral DNA or regulating viral gene expression. Interacts with host HMGB1; this interaction inhibits host immune response. In terms of processing, cleaved near the N-terminus by the viral protease during virion maturation to form the mature protein.

The protein resides in the virion. It localises to the host nucleus. It is found in the host nucleolus. Functionally, plays a role in the inhibition of host immune response within the nucleus. Interacts with cellular nucleosomes and immobilizes the host immune danger signal HMGB1 on chromatin. In turn, prevents HMGB1 release out of the cell and thus decreases inflammation. Also plays a role in the wrapping and condensation of the viral DNA. May also promote viral genome import into the nucleus. The chain is Pre-histone-like nucleoprotein from Canis lupus familiaris (Dog).